Consider the following 441-residue polypeptide: Interferon-related developmental regulator 2 (441 aa).

A compositionally biased stretch (basic residues) spans 1 to 15 (MPRARKGNTPRKGGQ). Residues 1–72 (MPRARKGNTP…TVDEQGPQED (72 aa)) are disordered. Residues 63-72 (TVDEQGPQED) are compositionally biased toward acidic residues.

This sequence belongs to the IFRD family. Associates with ribosomes; promoting ribosome inactivation.

In terms of biological role, ribosome-binding protein that acts as an inhibitor of mRNA translation by promoting ribosome inactivation. Associates with the P- and E-sites of the ribosome and inserts a C-terminal helix into the mRNA exit channel to preclude translation. In Oryctolagus cuniculus (Rabbit), this protein is Interferon-related developmental regulator 2.